A 437-amino-acid polypeptide reads, in one-letter code: Methylenetetrahydrofolate--tRNA-(uracil-5-)-methyltransferase TrmFO (437 aa).

Gly10–Gly15 provides a ligand contact to FAD.

The protein belongs to the MnmG family. TrmFO subfamily. Requires FAD as cofactor.

It localises to the cytoplasm. The catalysed reaction is uridine(54) in tRNA + (6R)-5,10-methylene-5,6,7,8-tetrahydrofolate + NADH + H(+) = 5-methyluridine(54) in tRNA + (6S)-5,6,7,8-tetrahydrofolate + NAD(+). The enzyme catalyses uridine(54) in tRNA + (6R)-5,10-methylene-5,6,7,8-tetrahydrofolate + NADPH + H(+) = 5-methyluridine(54) in tRNA + (6S)-5,6,7,8-tetrahydrofolate + NADP(+). In terms of biological role, catalyzes the folate-dependent formation of 5-methyl-uridine at position 54 (M-5-U54) in all tRNAs. This is Methylenetetrahydrofolate--tRNA-(uracil-5-)-methyltransferase TrmFO from Geotalea daltonii (strain DSM 22248 / JCM 15807 / FRC-32) (Geobacter daltonii).